The primary structure comprises 380 residues: Alkaline protease (380 aa).

The signal sequence occupies residues 1-27 (MKKPLGKIVASTALLISVAFSSSIASA). The propeptide occupies 28 to 111 (AEEAKEKYLI…IEEDAEVTTM (84 aa)). The region spanning 34-111 (KYLIGFNEQE…IEEDAEVTTM (78 aa)) is the Inhibitor I9 domain. Residue Q113 coordinates Ca(2+). Residues 116 to 379 (PWGISRVQAP…SGLVNAEAAT (264 aa)) form the Peptidase S8 domain. The active-site Charge relay system is D143. D151 is a binding site for Ca(2+). H173 functions as the Charge relay system in the catalytic mechanism. Ca(2+)-binding residues include L184, N186, I188, V190, A274, Y276, and A279. The active-site Charge relay system is the S326.

This sequence belongs to the peptidase S8 family. It depends on Ca(2+) as a cofactor.

Its subcellular location is the secreted. This is Alkaline protease from Shouchella clausii (Alkalihalobacillus clausii).